Here is a 132-residue protein sequence, read N- to C-terminus: C-glycoside deglycosidase beta subunit (132 aa).

This sequence belongs to the C-glycoside deglycosidase beta subunit family. In terms of assembly, heterodimer composed of an alpha subunit (CarB2) and a beta subunit (CarC2). It depends on a divalent metal cation as a cofactor.

It carries out the reaction 3''-dehydroorientin = 1,5-anhydro-D-erythro-hex-1-en-3-ulose + luteolin. Its activity is regulated as follows. Activity is strongly reduced in the presence of chelating agents. Its function is as follows. Carbon-carbon bond-cleaving enzyme which participates in the metabolism of C-glycosides. Acts on the C8-glycosylated compound 3''-dehydroorientin (3''-oxo-orientin). The protein is C-glycoside deglycosidase beta subunit of Arthrobacter globiformis (strain ATCC 8010 / DSM 20124 / JCM 1332 / NBRC 12137 / NCIMB 8907 / NRRL B-2979 / 168).